A 452-amino-acid polypeptide reads, in one-letter code: Protein CSN12 homolog (452 aa).

The PCI domain occupies 249–446 (VTFKYYEGVL…GFVVLSKSGA (198 aa)).

This sequence belongs to the CSN12 family.

The protein is Protein CSN12 homolog (csn-8) of Neurospora crassa (strain ATCC 24698 / 74-OR23-1A / CBS 708.71 / DSM 1257 / FGSC 987).